A 66-amino-acid polypeptide reads, in one-letter code: Large ribosomal subunit protein bL35 (66 aa).

It belongs to the bacterial ribosomal protein bL35 family.

The chain is Large ribosomal subunit protein bL35 from Deinococcus deserti (strain DSM 17065 / CIP 109153 / LMG 22923 / VCD115).